Here is a 571-residue protein sequence, read N- to C-terminus: Urease subunit alpha (571 aa).

The Urease domain occupies 133–571; the sequence is GGIDTHVHFI…LPLAQRYFLF (439 aa). Ni(2+)-binding residues include H138, H140, and K221. At K221 the chain carries N6-carboxylysine. Residue H223 participates in substrate binding. 2 residues coordinate Ni(2+): H250 and H276. Catalysis depends on H324, which acts as the Proton donor. Ni(2+) is bound at residue D364.

Belongs to the metallo-dependent hydrolases superfamily. Urease alpha subunit family. As to quaternary structure, heterotrimer of UreA (gamma), UreB (beta) and UreC (alpha) subunits. Three heterotrimers associate to form the active enzyme. Ni cation is required as a cofactor. Carboxylation allows a single lysine to coordinate two nickel ions.

It localises to the cytoplasm. The catalysed reaction is urea + 2 H2O + H(+) = hydrogencarbonate + 2 NH4(+). It participates in nitrogen metabolism; urea degradation; CO(2) and NH(3) from urea (urease route): step 1/1. The protein is Urease subunit alpha of Staphylococcus carnosus (strain TM300).